A 217-amino-acid chain; its full sequence is MSWRYALKNYVTSPETVNDDTVTYFDDKVSIIRDSFPKSECHLLILPRTMQLSRSHPTKVIDAKFKNEFESYVNSAIDHIFRHFQEKFRIKKSDDDKDPCWDDILKDKNKFVRNFVQVGIHSVPSMANLHIHVISKDFHSVRLKNKKHYNSFNTGFFISWDDLPLNGKNLGTDKEIETTYLKEHDLLCCYCQRNFSNKFSLLKKHLELEFNSHFELK.

An HIT domain is found at 6 to 139 (ALKNYVTSPE…HIHVISKDFH (134 aa)). Interaction with DNA regions lie at residues 34–38 (DSFPK), 121–132 (HSVPSMANLHIH), and 144–148 (KNKKH). Histidine 130 acts as the Nucleophile in catalysis. Positions 188, 191, 205, and 209 each coordinate Zn(2+).

The protein localises to the nucleus. It localises to the cytoplasm. It catalyses the reaction a 5'-end adenosine-5'-diphospho-5'-2'-deoxyribonucleoside-DNA + H2O = a 5'-end 5'-phospho-2'-deoxyribonucleoside-DNA + AMP + 2 H(+). The enzyme catalyses a 5'-end adenosine-5'-diphospho-5'-ribonucleoside-2'-deoxyribonucleotide-DNA + H2O = a 5'-end 5'-phospho-ribonucleoside-2'-deoxyribonucleotide-DNA + AMP + 2 H(+). It carries out the reaction a 3'-end 2'-deoxyribonucleotide-3'-diphospho-5'-guanosine-DNA + H2O = a 3'-end 2'-deoxyribonucleotide 3'-phosphate-DNA + GMP + 2 H(+). DNA-binding protein involved in single-strand DNA break repair, double-strand DNA break repair and base excision repair. Resolves abortive DNA ligation intermediates formed either at base excision sites, or when DNA ligases attempt to repair non-ligatable breaks induced by reactive oxygen species. Catalyzes the release of adenylate groups covalently linked to 5'-phosphate termini, resulting in the production of 5'-phosphate termini that can be efficiently rejoined. Likewise, catalyzes the release of 3'-linked guanosine (DNAppG) and inosine (DNAppI) from DNA, but has higher specific activity with 5'-linked adenosine (AppDNA). The polypeptide is Aprataxin-like protein (HNT3) (Saccharomyces cerevisiae (strain ATCC 204508 / S288c) (Baker's yeast)).